A 339-amino-acid chain; its full sequence is MTRILLLLHPTAVTDEQLVTKVKSEISSTNSDADVVQHIIDRVANKIVKLENNTFDEVIYINPNEGEFNRQLPVSTITIIYDSLVEDGVLKGDLPTNQNLDAIMSGFIVGEQGNWIKPKAVGESVSIPLKKKEVAVGGASKQCLPSFKKLSSTHAAVGLTDTSASNTDEENDDVNSKRKLQETKLAYFSESDDEDEEDQIIDENNLISEVRTANLVVPKKCELPNGKKRRKACKDCTCGLKEIEAQETSDKSTLQNSILNQMVQSANLEAMKIEEKMKNAVKFDDNDLAEIDFTVEGKKGGCSSCSLGDAFRCDGCPYLGLPPFKPGEVVSIDNFGEDI.

The N-terminal SAM-like domain stretch occupies residues 1–157 (MTRILLLLHP…KKLSSTHAAV (157 aa)). Residues 158 to 206 (GLTDTSASNTDEENDDVNSKRKLQETKLAYFSESDDEDEEDQIIDENNL) are linker. Positions 221, 233, 236, and 238 each coordinate [2Fe-2S] cluster. The interval 221–238 (CELPNGKKRRKACKDCTC) is fe-S binding site A. [4Fe-4S] cluster is bound by residues Cys302, Cys305, Cys313, and Cys316. 2 short sequence motifs (cx2C motif) span residues 302–305 (CSSC) and 313–316 (CDGC). Residues 302-316 (CSSCSLGDAFRCDGC) are fe-S binding site B.

This sequence belongs to the anamorsin family. Monomer. Interacts with TAH18. Interacts with MIA40. [2Fe-2S] cluster serves as cofactor. Requires [4Fe-4S] cluster as cofactor.

It is found in the cytoplasm. The protein localises to the mitochondrion intermembrane space. Functionally, component of the cytosolic iron-sulfur (Fe-S) protein assembly (CIA) machinery required for the maturation of extramitochondrial Fe-S proteins. Part of an electron transfer chain functioning in an early step of cytosolic Fe-S biogenesis, facilitating the de novo assembly of a [4Fe-4S] cluster on the scaffold complex CFD1-NBP35. Electrons are transferred to DRE2 from NADPH via the FAD- and FMN-containing protein TAH18. TAH18-DRE2 are also required for the assembly of the diferric tyrosyl radical cofactor of ribonucleotide reductase (RNR), probably by providing electrons for reduction during radical cofactor maturation in the catalytic small subunit RNR2. This Debaryomyces hansenii (strain ATCC 36239 / CBS 767 / BCRC 21394 / JCM 1990 / NBRC 0083 / IGC 2968) (Yeast) protein is Fe-S cluster assembly protein DRE2.